Consider the following 460-residue polypeptide: ATP synthase subunit beta (460 aa).

149–156 (GGAGVGKT) is a binding site for ATP.

This sequence belongs to the ATPase alpha/beta chains family. In terms of assembly, F-type ATPases have 2 components, CF(1) - the catalytic core - and CF(0) - the membrane proton channel. CF(1) has five subunits: alpha(3), beta(3), gamma(1), delta(1), epsilon(1). CF(0) has three main subunits: a(1), b(2) and c(9-12). The alpha and beta chains form an alternating ring which encloses part of the gamma chain. CF(1) is attached to CF(0) by a central stalk formed by the gamma and epsilon chains, while a peripheral stalk is formed by the delta and b chains.

The protein localises to the cell inner membrane. The catalysed reaction is ATP + H2O + 4 H(+)(in) = ADP + phosphate + 5 H(+)(out). Produces ATP from ADP in the presence of a proton gradient across the membrane. The catalytic sites are hosted primarily by the beta subunits. This is ATP synthase subunit beta from Nitrosomonas europaea (strain ATCC 19718 / CIP 103999 / KCTC 2705 / NBRC 14298).